We begin with the raw amino-acid sequence, 151 residues long: Deoxyuridine 5'-triphosphate nucleotidohydrolase (151 aa).

Substrate contacts are provided by residues 70-72 (RSG), N83, 87-89 (LID), and M97.

Belongs to the dUTPase family. Mg(2+) is required as a cofactor.

The catalysed reaction is dUTP + H2O = dUMP + diphosphate + H(+). It participates in pyrimidine metabolism; dUMP biosynthesis; dUMP from dCTP (dUTP route): step 2/2. This enzyme is involved in nucleotide metabolism: it produces dUMP, the immediate precursor of thymidine nucleotides and it decreases the intracellular concentration of dUTP so that uracil cannot be incorporated into DNA. This Glaesserella parasuis serovar 5 (strain SH0165) (Haemophilus parasuis) protein is Deoxyuridine 5'-triphosphate nucleotidohydrolase.